The chain runs to 87 residues: Putative outer membrane protein ArbH (87 aa).

Positions 1–23 are cleaved as a signal peptide; the sequence is MKIKNSYLVIASLLYPISFISTA.

Belongs to the porin LamB (TC 1.B.3) family.

The protein resides in the cell outer membrane. Its function is as follows. May be a sugar porin with a broad carbohydrate specificity. The protein is Putative outer membrane protein ArbH (arbH) of Dickeya chrysanthemi (Pectobacterium chrysanthemi).